Here is a 337-residue protein sequence, read N- to C-terminus: Mannitol dehydrogenase (337 aa).

Cys-27, His-49, Cys-80, Cys-83, Cys-86, Cys-94, and Cys-143 together coordinate Zn(2+).

Belongs to the zinc-containing alcohol dehydrogenase family. Zn(2+) is required as a cofactor.

The enzyme catalyses D-mannitol + NAD(+) = D-mannose + NADH + H(+). Its function is as follows. Oxidizes mannitol to mannose. Provides the initial step by which translocated mannitol is committed to central metabolism and, by regulating mannitol pool size, is important in regulating salt tolerance at the cellular level. This Petroselinum crispum (Parsley) protein is Mannitol dehydrogenase (ELI3).